Reading from the N-terminus, the 240-residue chain is 2-C-methyl-D-erythritol 2,4-cyclodiphosphate synthase, apicoplast (240 aa).

A divalent metal cation is bound by residues Asp-71 and His-73. 4-CDP-2-C-methyl-D-erythritol 2-phosphate is bound by residues 71–73 (DIH) and 115–116 (HS). His-123 is an a divalent metal cation binding site. 4-CDP-2-C-methyl-D-erythritol 2-phosphate-binding positions include 137–139 (DIG), 142–146 (FPDKD), 181–187 (AQVPKIS), and 212–214 (GKT).

It belongs to the IspF family. Homotrimer. It depends on a divalent metal cation as a cofactor.

It is found in the plastid. Its subcellular location is the apicoplast. The enzyme catalyses 4-CDP-2-C-methyl-D-erythritol 2-phosphate = 2-C-methyl-D-erythritol 2,4-cyclic diphosphate + CMP. Its pathway is isoprenoid biosynthesis; isopentenyl diphosphate biosynthesis via DXP pathway; isopentenyl diphosphate from 1-deoxy-D-xylulose 5-phosphate: step 4/6. In the mevalonate-independent isoprenoid biosynthetic pathway, converts 4-diphosphocytidyl-2C-methyl-D-erythritol 2-phosphate into 2C-methyl-D-erythritol 2,4-cyclodiphosphate and CMP. The polypeptide is 2-C-methyl-D-erythritol 2,4-cyclodiphosphate synthase, apicoplast (Plasmodium falciparum (isolate 3D7)).